We begin with the raw amino-acid sequence, 151 residues long: Deoxyuridine 5'-triphosphate nucleotidohydrolase (151 aa).

Residues 69-71 (RSG), N82, 86-88 (LID), and M96 contribute to the substrate site.

The protein belongs to the dUTPase family. Requires Mg(2+) as cofactor.

It catalyses the reaction dUTP + H2O = dUMP + diphosphate + H(+). Its pathway is pyrimidine metabolism; dUMP biosynthesis; dUMP from dCTP (dUTP route): step 2/2. This enzyme is involved in nucleotide metabolism: it produces dUMP, the immediate precursor of thymidine nucleotides and it decreases the intracellular concentration of dUTP so that uracil cannot be incorporated into DNA. This is Deoxyuridine 5'-triphosphate nucleotidohydrolase from Blochmanniella floridana.